The following is a 932-amino-acid chain: Protocadherin gamma-A7 (932 aa).

The N-terminal stretch at 1 to 28 is a signal peptide; that stretch reads MAAQPRGGDCRGFVLLSILLGTPWEAWA. Cadherin domains follow at residues 29–133, 134–242, 243–347, 348–452, 453–562, and 570–682; these read GRIL…VPRF, LTEE…TPVF, SLPQ…APEV, TMTS…PPTF, PHSS…PPEI, and DGST…EPSD. Residues 29-692 are Extracellular-facing; sequence GRILYSVSEE…GPYNYDLTLY (664 aa). N-linked (GlcNAc...) asparagine glycosylation is found at N419 and N545. The chain crosses the membrane as a helical span at residues 693–713; it reads LVVAVAAVSCVFLAFVLVLLA. The Cytoplasmic segment spans residues 714-932; it reads LRLRRWHKSR…KKKSGKKEKK (219 aa). 2 disordered regions span residues 804 to 841 and 902 to 932; these read VPSI…WPNN and ATLT…KEKK. A compositionally biased stretch (polar residues) spans 806 to 841; that stretch reads SIQQAPPNTDWRFSQAQRPGTSGSQNGDDTGTWPNN. Over residues 922 to 932 the composition is skewed to basic residues; the sequence is NKKKSGKKEKK.

The protein resides in the cell membrane. In terms of biological role, potential calcium-dependent cell-adhesion protein. May be involved in the establishment and maintenance of specific neuronal connections in the brain. The sequence is that of Protocadherin gamma-A7 (PCDHGA7) from Pan troglodytes (Chimpanzee).